The sequence spans 500 residues: L-aspartate semialdehyde sulfurtransferase (500 aa).

Catalysis depends on Cys131, which acts as the Cysteine persulfide intermediate. CBS domains follow at residues 384-441 (MADF…IFDS) and 446-500 (MTKK…ARRY).

Belongs to the L-aspartate semialdehyde sulfurtransferase family. Forms homodimers. May form a complex with MA_1822.

The catalysed reaction is L-aspartate 4-semialdehyde + reduced 2[4Fe-4S]-[ferredoxin] + hydrogen sulfide + 3 H(+) = oxidized 2[4Fe-4S]-[ferredoxin] + L-homocysteine + H2O. The protein operates within amino-acid biosynthesis. Functionally, required for O-acetylhomoserine sulfhydrylase (OAHS)-independent homocysteine (Hcy) biosynthesis. Together with MA_1822, catalyzes the condensation of sulfide with aspartate semialdehyde to generate homocysteine. Likely functions through persulfide intermediate. The chain is L-aspartate semialdehyde sulfurtransferase from Methanosarcina acetivorans (strain ATCC 35395 / DSM 2834 / JCM 12185 / C2A).